The following is a 382-amino-acid chain: Glutamyl-tRNA reductase (382 aa).

Substrate is bound by residues 38–41, Ser-85, 90–92, and Gln-96; these read TCNR and ENQ. Cys-39 functions as the Nucleophile in the catalytic mechanism. An NADP(+)-binding site is contributed by 164-169; it reads GAGEIG.

It belongs to the glutamyl-tRNA reductase family. Homodimer.

It catalyses the reaction (S)-4-amino-5-oxopentanoate + tRNA(Glu) + NADP(+) = L-glutamyl-tRNA(Glu) + NADPH + H(+). The protein operates within porphyrin-containing compound metabolism; protoporphyrin-IX biosynthesis; 5-aminolevulinate from L-glutamyl-tRNA(Glu): step 1/2. In terms of biological role, catalyzes the NADPH-dependent reduction of glutamyl-tRNA(Glu) to glutamate 1-semialdehyde (GSA). This chain is Glutamyl-tRNA reductase, found in Methanococcus maripaludis (strain C7 / ATCC BAA-1331).